The chain runs to 387 residues: Oxidase FUB9 (387 aa).

A disordered region spans residues 1-20 (MSRTNLPIQPAKMSDATSSK). One can recognise an FMN hydroxy acid dehydrogenase domain in the interval 18-379 (SSKPQIFSIQ…TPAHLSILNA (362 aa)). Y44 serves as a coordination point for a 2-oxocarboxylate. S126, Q150, and T178 together coordinate FMN. R187 lines the a 2-oxocarboxylate pocket. Residue K250 participates in FMN binding. Residue H274 is the Proton acceptor of the active site. R277 lines the a 2-oxocarboxylate pocket. FMN contacts are provided by residues 305–309 (DGGFR) and 328–329 (GR).

Belongs to the FMN-dependent alpha-hydroxy acid dehydrogenase family. The cofactor is FMN.

It functions in the pathway mycotoxin biosynthesis. Oxidase; part of the gene cluster that mediates the biosynthesis of fusaric acid, a mycotoxin with low to moderate toxicity to animals and humans, but with high phytotoxic properties. L-aspartate is suggested as fusaric acid amino acid precursor that is activated and further processed to O-acetyl-L-homoserine by cluster enzymes aspartate kinase FUB3 and homoserine O-acetyltransferase FUB5, as well as enzymes of the primary metabolism. The polyketide synthase (PKS) FUB1 generates the triketide trans-2-hexenal which is presumptively released by the hydrolase FUB4 and linked to the NRPS-bound amino acid precursor by NAD(P)-dependent dehydrogenase FUB6. FUB1, FUB4, and the non-canonical NRPS Fub8 may form an enzyme complex. Further processing of the NRPS-bound intermediate might be carried out by FUB6 and the sulfhydrylase FUB7, enabling a spontaneous electrocyclization to close the carbon backbone of fusaric acid. Dihydrofusaric acid is likely to be released via reduction by the thioester reductase (TR) domain of FUB8 whereupon the final oxidation to fusaric acid may (also) be performed by the FMN-dependent dehydrogenase FUB9. The chain is Oxidase FUB9 from Fusarium oxysporum f. sp. lycopersici (strain 4287 / CBS 123668 / FGSC 9935 / NRRL 34936) (Fusarium vascular wilt of tomato).